The following is a 101-amino-acid chain: Phosphoribosyl-AMP cyclohydrolase (101 aa).

D71 lines the Mg(2+) pocket. C72 contributes to the Zn(2+) binding site. Mg(2+)-binding residues include D73 and D75. Residues C88 and C95 each coordinate Zn(2+).

It belongs to the PRA-CH family. Homodimer. Requires Mg(2+) as cofactor. The cofactor is Zn(2+).

It is found in the cytoplasm. The enzyme catalyses 1-(5-phospho-beta-D-ribosyl)-5'-AMP + H2O = 1-(5-phospho-beta-D-ribosyl)-5-[(5-phospho-beta-D-ribosylamino)methylideneamino]imidazole-4-carboxamide. It participates in amino-acid biosynthesis; L-histidine biosynthesis; L-histidine from 5-phospho-alpha-D-ribose 1-diphosphate: step 3/9. Functionally, catalyzes the hydrolysis of the adenine ring of phosphoribosyl-AMP. This chain is Phosphoribosyl-AMP cyclohydrolase, found in Bacillus cereus (strain AH187).